Reading from the N-terminus, the 52-residue chain is Light-harvesting protein B-870 alpha chain (52 aa).

The Cytoplasmic segment spans residues 1–15 (MAKFYKIWLIFDPRR). Residues 16–36 (VFVAQGVFLFLLAAMIHLVVL) traverse the membrane as a helical segment. His-32 is a binding site for a bacteriochlorophyll. Residues 37–52 (SSGLNWFEAAAAVGGQ) lie on the Periplasmic side of the membrane.

Belongs to the antenna complex alpha subunit family. As to quaternary structure, the core complex is formed by different alpha and beta chains, binding bacteriochlorophyll molecules, and arranged most probably in tetrameric structures disposed around the reaction center. The non-pigmented gamma chains may constitute additional components.

The protein resides in the cell inner membrane. Antenna complexes are light-harvesting systems, which transfer the excitation energy to the reaction centers. The protein is Light-harvesting protein B-870 alpha chain (pufA) of Roseobacter denitrificans (strain ATCC 33942 / OCh 114) (Erythrobacter sp. (strain OCh 114)).